A 414-amino-acid chain; its full sequence is Gamma-glutamyl phosphate reductase (414 aa).

Belongs to the gamma-glutamyl phosphate reductase family.

The protein localises to the cytoplasm. It carries out the reaction L-glutamate 5-semialdehyde + phosphate + NADP(+) = L-glutamyl 5-phosphate + NADPH + H(+). It functions in the pathway amino-acid biosynthesis; L-proline biosynthesis; L-glutamate 5-semialdehyde from L-glutamate: step 2/2. Its function is as follows. Catalyzes the NADPH-dependent reduction of L-glutamate 5-phosphate into L-glutamate 5-semialdehyde and phosphate. The product spontaneously undergoes cyclization to form 1-pyrroline-5-carboxylate. The chain is Gamma-glutamyl phosphate reductase from Alkaliphilus metalliredigens (strain QYMF).